The primary structure comprises 381 residues: Metacaspase-8 (381 aa).

Active-site residues include His-86 and Cys-140. At Cys-140 the chain carries S-nitrosocysteine.

It belongs to the peptidase C14B family. Proteolytically processed; by an autocatalytic mechanism.

Its function is as follows. Cysteine protease that cleaves specifically after arginine residues. Does not cleave caspase-specific substrates. May be involved in the modulation of programmed cell death activated by oxidative stress. This Arabidopsis thaliana (Mouse-ear cress) protein is Metacaspase-8 (AMC8).